A 71-amino-acid polypeptide reads, in one-letter code: Antitoxin VapB22 (71 aa).

This sequence belongs to the phD/YefM antitoxin family.

Functionally, antitoxin component of a type II toxin-antitoxin (TA) system. Upon expression in M.smegmatis neutralizes the effect of cognate toxin VapC22. The protein is Antitoxin VapB22 (vapB22) of Mycobacterium tuberculosis (strain ATCC 25618 / H37Rv).